A 313-amino-acid polypeptide reads, in one-letter code: Acetaldehyde dehydrogenase (313 aa).

12–15 is an NAD(+) binding site; sequence SGNI. The active-site Acyl-thioester intermediate is Cys132. Residues 163–171 and Asn291 contribute to the NAD(+) site; that span reads SAGPGTRAN.

This sequence belongs to the acetaldehyde dehydrogenase family.

It catalyses the reaction acetaldehyde + NAD(+) + CoA = acetyl-CoA + NADH + H(+). The sequence is that of Acetaldehyde dehydrogenase (bphG) from Burkholderia cepacia (Pseudomonas cepacia).